The chain runs to 421 residues: ATP-dependent RNA helicase RhlB (421 aa).

The short motif at glutamine 9–alanine 37 is the Q motif element. The region spanning leucine 40 to valine 219 is the Helicase ATP-binding domain. Alanine 53–threonine 60 provides a ligand contact to ATP. A DEAD box motif is present at residues aspartate 165 to aspartate 168. The region spanning arginine 245 to leucine 390 is the Helicase C-terminal domain. Positions leucine 390 to glycine 421 are disordered. The span at glycine 405–proline 414 shows a compositional bias: low complexity.

It belongs to the DEAD box helicase family. RhlB subfamily. In terms of assembly, component of the RNA degradosome, which is a multiprotein complex involved in RNA processing and mRNA degradation.

Its subcellular location is the cytoplasm. The enzyme catalyses ATP + H2O = ADP + phosphate + H(+). Functionally, DEAD-box RNA helicase involved in RNA degradation. Has RNA-dependent ATPase activity and unwinds double-stranded RNA. The polypeptide is ATP-dependent RNA helicase RhlB (Cronobacter sakazakii (strain ATCC BAA-894) (Enterobacter sakazakii)).